The primary structure comprises 960 residues: Phosphoenolpyruvate carboxylase 2 (960 aa).

Active-site residues include His-167 and Lys-595.

It belongs to the PEPCase type 1 family. Homotetramer. The cofactor is Mg(2+).

The protein localises to the cytoplasm. The catalysed reaction is oxaloacetate + phosphate = phosphoenolpyruvate + hydrogencarbonate. It functions in the pathway photosynthesis; C3 acid pathway. Through the carboxylation of phosphoenolpyruvate (PEP) it forms oxaloacetate, a four-carbon dicarboxylic acid source for the tricarboxylic acid cycle. The polypeptide is Phosphoenolpyruvate carboxylase 2 (Sorghum bicolor (Sorghum)).